A 132-amino-acid chain; its full sequence is Antimicrobial protein Ace-AMP1 (132 aa).

Residues 1–27 (MVRVVSLLAASTFILLIMIISSPYANS) form the signal peptide. 4 cysteine pairs are disulfide-bonded: Cys31-Cys76, Cys41-Cys54, Cys55-Cys100, and Cys74-Cys116.

The protein belongs to the plant LTP family. Highly divergent. In terms of assembly, monomer.

Functionally, antifungal and antibacterial activity against the Gram-positive bacteria B.megaterium and S.lutea. The chain is Antimicrobial protein Ace-AMP1 from Allium cepa (Onion).